The sequence spans 145 residues: AN1-type zinc finger protein 2A (145 aa).

2 consecutive AN1-type zinc fingers follow at residues 4–52 (PDLG…QKDV) and 94–142 (KIFT…RPTI). Positions 10, 15, 25, 28, 33, 36, 42, 44, 100, 105, 115, 118, 123, 126, 132, and 134 each coordinate Zn(2+).

It is found in the cytoplasm. The protein localises to the nucleus. The chain is AN1-type zinc finger protein 2A (ZFAND2A) from Homo sapiens (Human).